The following is an 864-amino-acid chain: Protein translocase subunit SecA (864 aa).

ATP contacts are provided by residues glutamine 87, 105-109 (GEGKT), and aspartate 494. A disordered region spans residues 809-864 (AKATELRHKEQPAELSYSGGDEDGAKTPSRRNAPKVGRNDPCPCGSGKKYKKCCGA). Positions 810 to 820 (KATELRHKEQP) are enriched in basic and acidic residues. Zn(2+)-binding residues include cysteine 850, cysteine 852, cysteine 861, and cysteine 862.

It belongs to the SecA family. As to quaternary structure, monomer and homodimer. Part of the essential Sec protein translocation apparatus which comprises SecA, SecYEG and auxiliary proteins SecDF-YajC and YidC. Requires Zn(2+) as cofactor.

It is found in the cell inner membrane. The protein resides in the cytoplasm. It catalyses the reaction ATP + H2O + cellular proteinSide 1 = ADP + phosphate + cellular proteinSide 2.. In terms of biological role, part of the Sec protein translocase complex. Interacts with the SecYEG preprotein conducting channel. Has a central role in coupling the hydrolysis of ATP to the transfer of proteins into and across the cell membrane, serving as an ATP-driven molecular motor driving the stepwise translocation of polypeptide chains across the membrane. This Oleidesulfovibrio alaskensis (strain ATCC BAA-1058 / DSM 17464 / G20) (Desulfovibrio alaskensis) protein is Protein translocase subunit SecA.